Here is a 520-residue protein sequence, read N- to C-terminus: Keratin, type II cytoskeletal 8 (520 aa).

A compositionally biased stretch (low complexity) spans 1–19 (MSTYSKKTSYTVKSSSSGS). Positions 1–20 (MSTYSKKTSYTVKSSSSGSI) are disordered. The interval 2–114 (STYSKKTSYT…DPNIQIVRTQ (113 aa)) is head. The residue at position 28 (S28) is a Phosphoserine. Positions 115–150 (EKEQIKTLNNRFASFIDKVRFLEQQNKMLETKWSLL) are coil 1A. The 312-residue stretch at 115–426 (EKEQIKTLNN…KLLEGEEDRL (312 aa)) folds into the IF rod domain. The tract at residues 151 to 166 (QNQTATRSNIDAMFEA) is linker 1. Positions 168 to 259 (IANLRRQLDS…QIFEEEIREL (92 aa)) are coil 1B. A linker 12 region spans residues 260–283 (QSQIKDTSVVVEMDNSRNLDMDAI). The tract at residues 284–422 (VAEVRAQYED…ATYRKLLEGE (139 aa)) is coil 2. The tail stretch occupies residues 423–520 (EDRLATGIKA…VSESSEVVQD (98 aa)).

Belongs to the intermediate filament family. Heterotetramer of two type I and two type II keratins. Keratin-8 associates with keratin-18. As to expression, expressed in simple epithelia.

The protein localises to the cytoplasm. Its subcellular location is the nucleus. The protein resides in the nucleoplasm. It is found in the nucleus matrix. Its function is as follows. Together with KRT19, helps to link the contractile apparatus to dystrophin at the costameres of striated muscle. The protein is Keratin, type II cytoskeletal 8 of Danio rerio (Zebrafish).